The chain runs to 89 residues: Small ribosomal subunit protein uS17 (89 aa).

This sequence belongs to the universal ribosomal protein uS17 family. As to quaternary structure, part of the 30S ribosomal subunit.

In terms of biological role, one of the primary rRNA binding proteins, it binds specifically to the 5'-end of 16S ribosomal RNA. This Novosphingobium aromaticivorans (strain ATCC 700278 / DSM 12444 / CCUG 56034 / CIP 105152 / NBRC 16084 / F199) protein is Small ribosomal subunit protein uS17.